The following is a 319-amino-acid chain: tRNA uridine(34) hydroxylase (319 aa).

In terms of domain architecture, Rhodanese spans 127-221; the sequence is KQEDTVIIDA…YGKDPEVQGE (95 aa). Cys181 acts as the Cysteine persulfide intermediate in catalysis.

The protein belongs to the TrhO family.

It catalyses the reaction uridine(34) in tRNA + AH2 + O2 = 5-hydroxyuridine(34) in tRNA + A + H2O. In terms of biological role, catalyzes oxygen-dependent 5-hydroxyuridine (ho5U) modification at position 34 in tRNAs. This Bacillus cereus (strain AH187) protein is tRNA uridine(34) hydroxylase.